We begin with the raw amino-acid sequence, 552 residues long: Mothers against decapentaplegic homolog 4 (552 aa).

The segment at 1–322 (MDNMSITNTP…PISNHPAPEY (322 aa)) is mediates interaction with ZBTB7A. The MH1 domain maps to 18-142 (SIVHSLMCHR…YERVVSPGID (125 aa)). The residue at position 37 (Lys-37) is an N6-acetyllysine. Residues 44–69 (VKKLKEKKDELDSLITAITTNGAHPS) form a required for interaction with TSC22D1 region. Residue Cys-71 coordinates Zn(2+). Residue Lys-113 forms a Glycyl lysine isopeptide (Lys-Gly) (interchain with G-Cter in SUMO2) linkage. Zn(2+) contacts are provided by Cys-115, Cys-127, and His-132. Positions 264 to 297 (STTTWTGSRTAPYPPNLPHHQNGHLQHHPPMPPH) are disordered. The SAD stretch occupies residues 275 to 320 (PYPPNLPHHQNGHLQHHPPMPPHPGHYWPVHNELAFQPPISNHPAP). The MH2 domain maps to 323 to 552 (WCSIAYFEMD…MPIADPQPLD (230 aa)). Residues Lys-428 and Lys-507 each carry the N6-acetyllysine modification. Lys-519 is covalently cross-linked (Glycyl lysine isopeptide (Lys-Gly) (interchain with G-Cter in ubiquitin)).

Belongs to the dwarfin/SMAD family. In terms of assembly, monomer; in the absence of TGF-beta activation. Heterotrimer; on TGF-beta activation. Heterotrimer composed of two molecules of a C-terminally phosphorylated R-SMAD molecule, SMAD2 or SMAD3, and one molecule of SMAD4 to form the transcriptional active SMAD2/SMAD3-SMAD4 complex. Found in a ternary complex composed of SMAD4, STK11/LKB1 and STK11IP. Found in a complex with SMAD1 and YY1. Identified in a complex that contains at least ZNF451, SMAD2, SMAD3 and SMAD4. Interacts with ATF2, COPS5, DACH1, MSG1, SKI, STK11/LKB1, STK11IP and TRIM33. Associates with ZNF423 or ZNF521 in response to BMP2 leading to activate transcription of BMP target genes. Interacts with USP9X. Interacts with RBPMS. Interacts with WWTR1 (via coiled-coil domain). Interacts with CITED1 and CITED2. Interacts with PDPK1 (via PH domain). Interacts with VPS39; this interaction affects heterodimer formation with SMAD3, but not with SMAD2, and leads to inhibition of SMAD3-dependent transcription activation. Interactions with VPS39 and SMAD2 may be mutually exclusive. Interacts (via MH2 domain) with ZNF451 (via N-terminal zinc-finger domains). Interacts with ZC3H3. Interacts weakly with ZNF8. Interacts with NUP93 and IPO7; translocates SMAD4 to the nucleus through the NPC upon BMP7 stimulation resulting in activation of SMAD4 signaling. Interacts with CREB3L1, the interaction takes place upon TGFB1 induction and SMAD4 acts as a CREB3L1 coactivator to induce the expression of genes involved in the assembly of collagen extracellular matrix. Interacts with DLX1. Interacts with ZBTB7A; the interaction is direct and stimulated by TGFB1. Interacts with CREBBP; the recruitment of this transcriptional coactivator is negatively regulated by ZBTB7A. Interacts with EP300; the interaction with this transcriptional coactivator is negatively regulated by ZBTB7A. Interacts with HDAC1. Interacts (via MH2 domain) with ZMIZ1 (via SP-RING-type domain); in the TGF-beta signaling pathway increases the activity of the SMAD3/SMAD4 transcriptional complex. Interacts (via N-terminus) with TSC22D1. Phosphorylated by PDPK1. Post-translationally, monoubiquitinated on Lys-519 by E3 ubiquitin-protein ligase TRIM33. Monoubiquitination hampers its ability to form a stable complex with activated SMAD2/3 resulting in inhibition of TGF-beta/BMP signaling cascade. Deubiquitination by USP9X restores its competence to mediate TGF-beta signaling.

It is found in the cytoplasm. Its subcellular location is the nucleus. Functionally, common SMAD (co-SMAD) is the coactivator and mediator of signal transduction by TGF-beta (transforming growth factor). Component of the heterotrimeric SMAD2/SMAD3-SMAD4 complex that forms in the nucleus and is required for the TGF-mediated signaling. Promotes binding of the SMAD2/SMAD4/FAST-1 complex to DNA and provides an activation function required for SMAD1 or SMAD2 to stimulate transcription. Component of the multimeric SMAD3/SMAD4/JUN/FOS complex which forms at the AP1 promoter site; required for synergistic transcriptional activity in response to TGF-beta. Acts synergistically with SMAD1 and YY1 in bone morphogenetic protein (BMP)-mediated cardiac-specific gene expression. Binds to SMAD binding elements (SBEs) (5'-GTCT/AGAC-3') within BMP response element (BMPRE) of cardiac activating regions. May act as a tumor suppressor. Positively regulates PDPK1 kinase activity by stimulating its dissociation from the 14-3-3 protein YWHAQ which acts as a negative regulator. In muscle physiology, plays a central role in the balance between atrophy and hypertrophy. When recruited by MSTN, promotes atrophy response via phosphorylated SMAD2/4. MSTN decrease causes SMAD4 release and subsequent recruitment by the BMP pathway to promote hypertrophy via phosphorylated SMAD1/5/8. The chain is Mothers against decapentaplegic homolog 4 (SMAD4) from Sus scrofa (Pig).